Here is a 187-residue protein sequence, read N- to C-terminus: Ribosome-recycling factor (187 aa).

It belongs to the RRF family.

Its subcellular location is the cytoplasm. Functionally, responsible for the release of ribosomes from messenger RNA at the termination of protein biosynthesis. May increase the efficiency of translation by recycling ribosomes from one round of translation to another. This chain is Ribosome-recycling factor, found in Rhodopseudomonas palustris (strain HaA2).